A 452-amino-acid polypeptide reads, in one-letter code: GTPase Der (452 aa).

EngA-type G domains are found at residues 4–169 (PVVA…PPQD) and 177–352 (IQMA…EQHR). Residues 10 to 17 (GRPNVGKS), 57 to 61 (DTGGL), 120 to 123 (NKCE), 183 to 190 (GRPNVGKS), 230 to 234 (DTAGI), and 295 to 298 (NKWD) contribute to the GTP site. The region spanning 353–438 (RRVTTAVVNE…PVRLFWRGKQ (86 aa)) is the KH-like domain.

The protein belongs to the TRAFAC class TrmE-Era-EngA-EngB-Septin-like GTPase superfamily. EngA (Der) GTPase family. As to quaternary structure, associates with the 50S ribosomal subunit.

Its function is as follows. GTPase that plays an essential role in the late steps of ribosome biogenesis. The sequence is that of GTPase Der from Synechococcus sp. (strain RCC307).